Reading from the N-terminus, the 442-residue chain is Galactose/N-acetylgalactosamine-binding lectin CEL-III (442 aa).

Positions 1–10 (MVSLVPCGFA) are cleaved as a propeptide — removed in mature form. Glutamine 11 bears the Pyrrolidone carboxylic acid mark. The has hemagglutinating activity towards rabbit erythrocytes, but no hemolytic activity towards them stretch occupies residues 11–304 (QVLCTNPLDI…DWEVPTATWN (294 aa)). 3 disulfides stabilise this stretch: cysteine 14/cysteine 59, cysteine 31/cysteine 48, and cysteine 72/cysteine 88. D-galactose contacts are provided by residues aspartate 19 and 33–36 (DIVG). 2 Ricin B-type lectin domains span residues 28-102 (SKQC…RWRL) and 115-245 (EQVA…WSRP). Aspartate 33, isoleucine 34, and glycine 36 together coordinate Ca(2+). Residues asparagine 42 and isoleucine 43 each coordinate Mg(2+). Aspartate 49 lines the D-galactose pocket. A Ca(2+)-binding site is contributed by aspartate 53. Asparagine 82 and valine 83 together coordinate Mg(2+). Residues valine 117 and 131–134 (DVEG) each bind D-galactose. The cysteines at positions 129 and 146 are disulfide-linked. Ca(2+) is bound by residues aspartate 131, valine 132, and glycine 134. Isoleucine 141 is a binding site for Mg(2+). 144 to 147 (YDCQ) contacts D-galactose. Aspartate 151, aspartate 178, valine 179, and glycine 181 together coordinate Ca(2+). A disulfide bridge links cysteine 176 with cysteine 193. 178-181 (DVEG) is a binding site for D-galactose. Mg(2+)-binding residues include asparagine 187 and valine 188. 191 to 194 (YSCE) is a binding site for D-galactose. The Ca(2+) site is built by aspartate 198, aspartate 219, valine 220, and glycine 222. The cysteines at positions 217 and 234 are disulfide-linked. Residue 219–222 (DVEG) coordinates D-galactose. 2 residues coordinate Mg(2+): asparagine 228 and valine 229. Position 232 to 235 (232 to 235 (YRCD)) interacts with D-galactose. Residue aspartate 239 participates in Ca(2+) binding. 2 disulfides stabilise this stretch: cysteine 249-cysteine 254 and cysteine 264-cysteine 281. Positions 261–293 (SNKCLDVSGDQGTGDVGTWQCDGLPDQRFKWVF) constitute a Ricin B-type lectin 3 domain. Ca(2+) contacts are provided by aspartate 266, valine 267, and glycine 269. Residue 266-269 (DVSG) coordinates D-galactose. Positions 275 and 276 each coordinate Mg(2+). D-galactose contacts are provided by residues 279–282 (WQCD) and aspartate 286. Aspartate 286 lines the Ca(2+) pocket. The segment at 294-442 (DDWEVPTATW…NEDCTFCTDI (149 aa)) is has a strong tendency to self-associate leading to formation of oligomers. 4 cysteine pairs are disulfide-bonded: cysteine 308/cysteine 390, cysteine 377/cysteine 416, cysteine 425/cysteine 439, and cysteine 431/cysteine 436.

In terms of assembly, oligomerizes in the human and rabbit erythrocyte membranes. Oligomerization is induced by binding of beta-1,4-linked disaccharide ligands such as lactose, lactulose, N-acetyllactosamine and phenyl-beta-D-galactoside, but only a little by N-acetylgalactosamine and galactose, and not at all by melibiose in aqueous solution in the presence of high salt concentration and pH 10. Forms heptamers that assemble into larger 21mer oligomers, which may be inserted as a transmembrane pore to the erythrocyte membrane. Ca(2+) is required as a cofactor. It depends on Mg(2+) as a cofactor. In terms of tissue distribution, expressed in body fluid (at protein level).

It localises to the secreted. Its activity is regulated as follows. Ca(2+) is required for hemolytic activity and the activity increases with increasing calcium concentration. Hemolytic activity is inhibited by N-acetylgalactosamine (GalNAc), lactose, lactulose, galactosamine, dextran with molecular masses greater than 4 kDa, to a lesser extent by inulin and only slightly by sucrose and melezitose, but not by glucose or mannose. The activity is abolished in the presence of 10 mM EDTA. Lactose-binding increases with increasing calcium concentration, but calcium has no effect on hemagglutinating activity. Cytotoxic effect on Madin-Darby canine kidney (MDCK) cell line is strongly inhibited by galactose, lactose and N-acetylgalactosamine (GalNAc), but not by raffinose, N-acetylglucosamine (GlcNAc), glucose, mannose, ribose or sucrose. Pore formation in artificial lactosyl ceramide (LacCer) or globotetraosylceramide (Gb4Cer) containing liposomes is strongly inhibited by lactose. In terms of biological role, galactose/N-acetylgalactosamine (Gal/GalNAc)-binding lectin with hemolytic activity. Favors saccharides that have a beta-1,4 linkage at the non-reducing end rather than saccharides having alpha-1,6 or alpha-1,4 linkages. Binds lactose, lactulose, GalNAc, galactosamine, methyl alpha-galactopyranoside, methyl beta-galactopyranoside, N-acetyllactosamine, p-nitrophenyl beta-D-galactopyranoside (pNP-Gal), p-nitrophenyl N-acetyl-beta-D-galactosaminide (pNP-GalNAc), asialofetuin, and human erythrocyte membrane lipids lactosyl ceramide (LacCer) and globoside globotetraosylceramide (Gb4Cer). Binds moderately to galactose, melibiose, raffinose, fucose, methyl alpha-galactoside and methyl beta-galactoside. Binds weakly to glucose, mannose and N-acetylglucosamine (GlcNAc). Has hemolytic activity towards human (A, B and O-type), rabbit and rat erythrocytes, but not towards mouse, chicken or horse erythrocytes. Forms ion-permeable transmembrane pores in the erythrocyte membrane as well as in artificial liposomes containing human erythrocyte membrane lipids LacCer, Gb4Cer and galactosyl ceramide (GalCer) leading to destruction of the membrane. Has hemagglutinating activity towards rabbit, human and rat erythrocytes, and at relatively high concentrations towards chicken and horse erythrocytes, but not towards mouse erythrocytes. Has dose-dependent cytotoxic effect on Madin-Darby canine kidney (MDCK), African green monkey kidney (Vero) and human epithelia carcinoma (HeLa) cell lines, but Chinese hamster ovary (CHO), rat sarcoma (XC) and potoroo rat kangaroo kidney (PtK1) cells are highly resistant to the cytotoxic effect of this protein. Impairs malaria parasite development in malaria parasite infected transgenic A.stephensi mosquitoes expressing this protein specifically in their midguts. Binds to ookinetes and leads to strong dose-dependent inhibition of ookinete formation in vitro. Leads to severely impaired oocyst formation and significantly reduced sporozoite production of rodent malaria parasite P.berghei in the salivary glands of the transgenic mosquitoes. The parasite transmission to uninfected mice (vectorial competence) of these mosquitoes is significantly impaired. Also leads to severely impaired oocyst formation of human malaria parasite P.falciparum in transgenic mosquitoes fed on mature P.falciparum gametocyte cultures. May be involved in defense mechanisms acting as a toxic protein to foreign microorganisms. May act in defense against predators. The sequence is that of Galactose/N-acetylgalactosamine-binding lectin CEL-III from Pseudocnus echinatus (Sea cucumber).